A 271-amino-acid chain; its full sequence is Aminoglycoside N(3)-acetyltransferase III (271 aa).

The CoA site is built by His-31, Ala-32, Ser-33, Val-34, and Lys-35. A 2-deoxystreptamine antibiotic is bound by residues Tyr-64, Asp-72, and Glu-102. Ser-104, Val-105, and Phe-109 together coordinate CoA. Residues Glu-123, Tyr-146, and Asp-170 each coordinate a 2-deoxystreptamine antibiotic. CoA contacts are provided by Thr-171 and Thr-173. The a 2-deoxystreptamine antibiotic site is built by His-176, Thr-212, Gly-213, and Phe-221.

Belongs to the antibiotic N-acetyltransferase family. Homodimer.

The enzyme catalyses a 2-deoxystreptamine antibiotic + acetyl-CoA = an N(3)-acetyl-2-deoxystreptamine antibiotic + CoA + H(+). Its function is as follows. Resistance to antibiotics containing the 2-deoxy-streptamine ring including dibekacin, gentamicin, kanamycin, sisomicin, tobramycin and neomycin, but not to amikacin or netilmicin. Acetylates a broad range of both 4,5- and 4,6-disubstituted aminoglycosides, including neomycin, paromomycin, ribostamycin, sisomicin, gentamicin, tobramycin and kanamycin, with no preference of one disubstitution over the other. Acetylates sisomicin and kanamycin most and least efficiently, respectively. Does not modify plazomicin. The polypeptide is Aminoglycoside N(3)-acetyltransferase III (Pseudomonas aeruginosa).